The sequence spans 256 residues: Small ribosomal subunit protein eS1 (256 aa).

Residues 1 to 18 (MAVGKNKRLSKGKKGVKK) show a composition bias toward basic residues. Residues 1 to 21 (MAVGKNKRLSKGKKGVKKRTV) are disordered. Ala2 carries the post-translational modification N-acetylalanine; partial.

It belongs to the eukaryotic ribosomal protein eS1 family. As to quaternary structure, component of the small ribosomal subunit. Mature ribosomes consist of a small (40S) and a large (60S) subunit. The 40S subunit contains about 33 different proteins and 1 molecule of RNA (18S). The 60S subunit contains about 49 different proteins and 3 molecules of RNA (25S, 5.8S and 5S).

It is found in the cytoplasm. This chain is Small ribosomal subunit protein eS1 (rps1), found in Aspergillus niger (strain ATCC MYA-4892 / CBS 513.88 / FGSC A1513).